The primary structure comprises 321 residues: Aspartate carbamoyltransferase catalytic subunit (321 aa).

Positions 64 and 65 each coordinate carbamoyl phosphate. L-aspartate is bound at residue Lys92. The carbamoyl phosphate site is built by Arg114, His144, and Gln147. Residues Arg177 and Arg232 each coordinate L-aspartate. Residues Gly273 and Pro274 each contribute to the carbamoyl phosphate site.

It belongs to the aspartate/ornithine carbamoyltransferase superfamily. ATCase family. Heterododecamer (2C3:3R2) of six catalytic PyrB chains organized as two trimers (C3), and six regulatory PyrI chains organized as three dimers (R2).

The catalysed reaction is carbamoyl phosphate + L-aspartate = N-carbamoyl-L-aspartate + phosphate + H(+). The protein operates within pyrimidine metabolism; UMP biosynthesis via de novo pathway; (S)-dihydroorotate from bicarbonate: step 2/3. Its function is as follows. Catalyzes the condensation of carbamoyl phosphate and aspartate to form carbamoyl aspartate and inorganic phosphate, the committed step in the de novo pyrimidine nucleotide biosynthesis pathway. The polypeptide is Aspartate carbamoyltransferase catalytic subunit (Alkalilimnicola ehrlichii (strain ATCC BAA-1101 / DSM 17681 / MLHE-1)).